The following is a 239-amino-acid chain: Lactate utilization protein A 2 (239 aa).

This sequence belongs to the LutA/YkgE family.

Functionally, is involved in L-lactate degradation and allows cells to grow with lactate as the sole carbon source. The protein is Lactate utilization protein A 2 of Bacillus mycoides (strain KBAB4) (Bacillus weihenstephanensis).